We begin with the raw amino-acid sequence, 288 residues long: MKDRTQELRSAKDSDDEEEVVHVDRDHFMDEFFEQVEEIRGCIEKLSEDVEQVKKQHSAILAAPNPDEKTKQELEDLTTDIKKTANKVRSKLKAIEQSIEQEEGLNRSSADLRIRKTQHSTLSRKFVEVMTEYNATQSKYRDRCKDRIQRQLEITGRTTTNEELEDMLESGKLAIFTDDIKMDSQMTKQALNEIETRHNEIIKLETSIRELHDMFVDMAMLVESQGEMIDRIEYNVEHSVDYVERAVSDTKKAVKYQSKARRKKIMIIICCVVLGVVLASSIGGTLGL.

Residues 1 to 13 show a composition bias toward basic and acidic residues; the sequence is MKDRTQELRSAKD. The segment at 1 to 20 is disordered; sequence MKDRTQELRSAKDSDDEEEV. Topologically, residues 1–264 are cytoplasmic; the sequence is MKDRTQELRS…KYQSKARRKK (264 aa). Residues S10 and S14 each carry the phosphoserine modification. Residues 29–104 are a coiled coil; it reads MDEFFEQVEE…IEQSIEQEEG (76 aa). Positions 191 to 253 constitute a t-SNARE coiled-coil homology domain; the sequence is LNEIETRHNE…ERAVSDTKKA (63 aa). Residues 265-288 traverse the membrane as a helical; Anchor for type IV membrane protein segment; that stretch reads IMIIICCVVLGVVLASSIGGTLGL.

This sequence belongs to the syntaxin family. As to quaternary structure, interacts with OTOF. Interacts with SYT6 and SYT8; the interaction is Ca(2+)-dependent. Phosphorylated by CK2. In terms of processing, (Microbial infection) Targeted and hydrolyzed by C.botulinum neurotoxin type C (BoNT/C); cleavage by BoNT/C inhibits neurotransmitter release. Probably hydrolyzes the 252-Lys-|-Ala-253 bond.

The protein localises to the membrane. Potentially involved in docking of synaptic vesicles at presynaptic active zones. May mediate Ca(2+)-regulation of exocytosis acrosomal reaction in sperm. The protein is Syntaxin-1B (STX1B) of Bos taurus (Bovine).